The primary structure comprises 360 residues: Alanine racemase (360 aa).

Catalysis depends on K36, which acts as the Proton acceptor; specific for D-alanine. An N6-(pyridoxal phosphate)lysine modification is found at K36. R132 serves as a coordination point for substrate. Y256 (proton acceptor; specific for L-alanine) is an active-site residue. M304 lines the substrate pocket.

Belongs to the alanine racemase family. It depends on pyridoxal 5'-phosphate as a cofactor.

The enzyme catalyses L-alanine = D-alanine. Its pathway is amino-acid biosynthesis; D-alanine biosynthesis; D-alanine from L-alanine: step 1/1. In terms of biological role, catalyzes the interconversion of L-alanine and D-alanine. May also act on other amino acids. In Haemophilus influenzae (strain ATCC 51907 / DSM 11121 / KW20 / Rd), this protein is Alanine racemase (alr).